Consider the following 200-residue polypeptide: Snake venom serine protease VaSP1 (200 aa).

Residues 1–200 (VIGGDECNIN…EIQGIVSYGK (200 aa)) enclose the Peptidase S1 domain. Residues aspartate 88 and serine 182 each act as charge relay system in the active site.

As to quaternary structure, monomer. N-glycosylated. The protein exist in multiple isoforms. Expressed by the venom gland.

Its subcellular location is the secreted. Inhibited by Pefabloc (90% inhibition), DTT (90%), Zn(2+) (80%), trypsin inhibitor II (50%), and benzamidine (45%), but not inhibited by EDTA, Ca(2+), Mg(2+) and L-Cys. Functionally, snake venom serine protease active on several blood coagulation enzymes. It completely cleaves fibrinogen Aalpha chain (FGA) after 120 minutes, partially cleaves Bbeta chain (FGB) (overnight) and has no activity on gamma chain. It does not release fibrinopeptides A and/or B exclusively, since the enzyme does not provoke fibrin polymerisation. It also degrades fibrin as efficiently as plasmin, and exhibits potent ability to cleave plasminogen and prothrombin, as well as heavy chain of factor X (F10). In vitro, it cleaves insulin B-chain (at positions His38-Leu39, Ala40-Leu41 and Tyr16-Leu17). This is Snake venom serine protease VaSP1 from Vipera ammodytes ammodytes (Western sand viper).